Here is a 248-residue protein sequence, read N- to C-terminus: Ureidoacrylate amidohydrolase RutB (248 aa).

Aspartate 43 (proton acceptor) is an active-site residue. Lysine 152 is a catalytic residue. The Nucleophile role is filled by cysteine 185.

The protein belongs to the isochorismatase family. RutB subfamily.

It carries out the reaction (Z)-3-ureidoacrylate + H2O + H(+) = (Z)-3-aminoacrylate + NH4(+) + CO2. The catalysed reaction is (Z)-3-ureidoacrylate + H2O = (Z)-3-aminoacrylate + carbamate + H(+). The enzyme catalyses (Z)-2-methylureidoacrylate + H2O + H(+) = (Z)-2-methylaminoacrylate + NH4(+) + CO2. Functionally, hydrolyzes ureidoacrylate to form aminoacrylate and carbamate. The carbamate hydrolyzes spontaneously, thereby releasing one of the nitrogen atoms of the pyrimidine ring as ammonia and one of its carbon atoms as CO2. This chain is Ureidoacrylate amidohydrolase RutB, found in Serratia proteamaculans (strain 568).